The following is a 33-amino-acid chain: Brevinin-2LT (33 aa).

Residues cysteine 27 and cysteine 33 are joined by a disulfide bond.

In terms of tissue distribution, expressed by the skin glands.

It localises to the secreted. In terms of biological role, has antibacterial activity. The protein is Brevinin-2LT of Rana latastei (Italian agile frog).